Reading from the N-terminus, the 353-residue chain is Photosystem II protein D1 (353 aa).

Thr2 carries the post-translational modification N-acetylthreonine. Thr2 carries the post-translational modification Phosphothreonine. 3 consecutive transmembrane segments (helical) span residues Tyr29–Ser46, His118–Leu133, and Trp142–Ala156. Position 118 (His118) interacts with chlorophyll a. Tyr126 lines the pheophytin a pocket. Residues Asp170 and Glu189 each contribute to the [CaMn4O5] cluster site. The chain crosses the membrane as a helical span at residues Phe197–Leu218. Position 198 (His198) interacts with chlorophyll a. Residues His215 and Ser264–Phe265 each bind a quinone. Residue His215 participates in Fe cation binding. His272 is a binding site for Fe cation. Residues Phe274–Leu288 traverse the membrane as a helical segment. [CaMn4O5] cluster contacts are provided by His332, Glu333, Asp342, and Ala344. The propeptide occupies Ala345–Gly353.

This sequence belongs to the reaction center PufL/M/PsbA/D family. PSII is composed of 1 copy each of membrane proteins PsbA, PsbB, PsbC, PsbD, PsbE, PsbF, PsbH, PsbI, PsbJ, PsbK, PsbL, PsbM, PsbT, PsbX, PsbY, PsbZ, Psb30/Ycf12, at least 3 peripheral proteins of the oxygen-evolving complex and a large number of cofactors. It forms dimeric complexes. The D1/D2 heterodimer binds P680, chlorophylls that are the primary electron donor of PSII, and subsequent electron acceptors. It shares a non-heme iron and each subunit binds pheophytin, quinone, additional chlorophylls, carotenoids and lipids. D1 provides most of the ligands for the Mn4-Ca-O5 cluster of the oxygen-evolving complex (OEC). There is also a Cl(-1) ion associated with D1 and D2, which is required for oxygen evolution. The PSII complex binds additional chlorophylls, carotenoids and specific lipids. serves as cofactor. In terms of processing, tyr-161 forms a radical intermediate that is referred to as redox-active TyrZ, YZ or Y-Z. C-terminally processed by CTPA; processing is essential to allow assembly of the oxygen-evolving complex and thus photosynthetic growth.

The protein resides in the plastid. The protein localises to the chloroplast thylakoid membrane. It catalyses the reaction 2 a plastoquinone + 4 hnu + 2 H2O = 2 a plastoquinol + O2. Photosystem II (PSII) is a light-driven water:plastoquinone oxidoreductase that uses light energy to abstract electrons from H(2)O, generating O(2) and a proton gradient subsequently used for ATP formation. It consists of a core antenna complex that captures photons, and an electron transfer chain that converts photonic excitation into a charge separation. The D1/D2 (PsbA/PsbD) reaction center heterodimer binds P680, the primary electron donor of PSII as well as several subsequent electron acceptors. The sequence is that of Photosystem II protein D1 from Nicotiana debneyi (Debney's tobacco).